Reading from the N-terminus, the 393-residue chain is Digeranylgeranylglycerophospholipid reductase (393 aa).

FAD-binding residues include Ala13, Asp32, Cys43, Ala44, Gly46, Arg95, Val119, Asp274, and Gly286. 2 residues coordinate a 2,3-bis-O-(geranylgeranyl)-sn-glycerol 1-phospholipid: Arg327 and Gly363.

This sequence belongs to the geranylgeranyl reductase family. DGGGPL reductase subfamily. It depends on FAD as a cofactor.

It carries out the reaction a 2,3-bis-O-phytanyl-sn-glycerol 1-phospholipid + 8 A = a 2,3-bis-O-(geranylgeranyl)-sn-glycerol 1-phospholipid + 8 AH2. The catalysed reaction is 2,3-bis-O-(phytanyl)-sn-glycerol 1-phosphate + 8 A = 2,3-bis-O-(geranylgeranyl)-sn-glycerol 1-phosphate + 8 AH2. It catalyses the reaction CDP-2,3-bis-O-(geranylgeranyl)-sn-glycerol + 8 AH2 = CDP-2,3-bis-O-(phytanyl)-sn-glycerol + 8 A. The enzyme catalyses archaetidylserine + 8 AH2 = 2,3-bis-O-phytanyl-sn-glycero-3-phospho-L-serine + 8 A. Its pathway is membrane lipid metabolism; glycerophospholipid metabolism. Is involved in the reduction of 2,3-digeranylgeranylglycerophospholipids (unsaturated archaeols) into 2,3-diphytanylglycerophospholipids (saturated archaeols) in the biosynthesis of archaeal membrane lipids. Catalyzes the formation of archaetidic acid (2,3-di-O-phytanyl-sn-glyceryl phosphate) from 2,3-di-O-geranylgeranylglyceryl phosphate (DGGGP) via the hydrogenation of each double bond of the isoprenoid chains. Is also probably able to reduce double bonds of geranyl groups in CDP-2,3-bis-O-(geranylgeranyl)-sn-glycerol and archaetidylserine, thus acting at various stages in the biosynthesis of archaeal membrane lipids. The protein is Digeranylgeranylglycerophospholipid reductase of Pyrococcus horikoshii (strain ATCC 700860 / DSM 12428 / JCM 9974 / NBRC 100139 / OT-3).